Reading from the N-terminus, the 170-residue chain is Flavin reductase (170 aa).

NAD(+) contacts are provided by residues Ser51, His138, and 159 to 162 (FYRG).

This sequence belongs to the non-flavoprotein flavin reductase family. As to quaternary structure, homodimer. Likely forms a loose transient complex with monooxygenases for which it provides FMNH(2).

The catalysed reaction is FMNH2 + NAD(+) = FMN + NADH + 2 H(+). It catalyses the reaction FADH2 + NAD(+) = FAD + NADH + 2 H(+). Its function is as follows. Catalyzes the reduction of FMN, and to a lesser extent, FAD, using NADH as an electron donor. Is able to provide the FMNH(2) required for the Baeyer-Villiger oxidations catalyzed by 2,5-diketocamphane monooxygenases and 3,6-diketocamphane monooxygenase. NADPH acts as a very poor cosubstrate. This chain is Flavin reductase, found in Pseudomonas putida (Arthrobacter siderocapsulatus).